A 268-amino-acid chain; its full sequence is tRNA pseudouridine synthase A (268 aa).

The Nucleophile role is filled by aspartate 52. Residue tyrosine 110 participates in substrate binding.

Belongs to the tRNA pseudouridine synthase TruA family. As to quaternary structure, homodimer.

The catalysed reaction is uridine(38/39/40) in tRNA = pseudouridine(38/39/40) in tRNA. Functionally, formation of pseudouridine at positions 38, 39 and 40 in the anticodon stem and loop of transfer RNAs. The chain is tRNA pseudouridine synthase A from Prochlorococcus marinus subsp. pastoris (strain CCMP1986 / NIES-2087 / MED4).